Consider the following 170-residue polypeptide: Superoxide dismutase [Fe] (170 aa).

Residues His-27, His-81, Asp-163, and His-167 each coordinate Fe cation.

The protein belongs to the iron/manganese superoxide dismutase family. Homodimer. Fe cation serves as cofactor.

The catalysed reaction is 2 superoxide + 2 H(+) = H2O2 + O2. Functionally, destroys superoxide anion radicals which are normally produced within the cells and which are toxic to biological systems. The sequence is that of Superoxide dismutase [Fe] (sodA) from Raoultella planticola (Klebsiella planticola).